Consider the following 401-residue polypeptide: L-rhamnonate dehydratase (401 aa).

Substrate is bound by residues histidine 29 and arginine 55. Residues aspartate 222, glutamate 248, and glutamate 276 each coordinate Mg(2+). The active-site Proton acceptor is histidine 325. Substrate is bound at residue glutamate 345.

It belongs to the mandelate racemase/muconate lactonizing enzyme family. RhamD subfamily. As to quaternary structure, homooctamer; tetramer of dimers. Mg(2+) is required as a cofactor.

It carries out the reaction L-rhamnonate = 2-dehydro-3-deoxy-L-rhamnonate + H2O. In terms of biological role, catalyzes the dehydration of L-rhamnonate to 2-keto-3-deoxy-L-rhamnonate (KDR). In Salmonella schwarzengrund (strain CVM19633), this protein is L-rhamnonate dehydratase.